A 337-amino-acid chain; its full sequence is tRNA N6-adenosine threonylcarbamoyltransferase (337 aa).

Residues histidine 111 and histidine 115 each coordinate Fe cation. Substrate contacts are provided by residues 134–138, aspartate 167, glycine 180, and asparagine 272; that span reads LVSGG. Aspartate 300 contacts Fe cation.

This sequence belongs to the KAE1 / TsaD family. Fe(2+) serves as cofactor.

The protein localises to the cytoplasm. The enzyme catalyses L-threonylcarbamoyladenylate + adenosine(37) in tRNA = N(6)-L-threonylcarbamoyladenosine(37) in tRNA + AMP + H(+). Its function is as follows. Required for the formation of a threonylcarbamoyl group on adenosine at position 37 (t(6)A37) in tRNAs that read codons beginning with adenine. Is involved in the transfer of the threonylcarbamoyl moiety of threonylcarbamoyl-AMP (TC-AMP) to the N6 group of A37, together with TsaE and TsaB. TsaD likely plays a direct catalytic role in this reaction. The polypeptide is tRNA N6-adenosine threonylcarbamoyltransferase (Klebsiella pneumoniae (strain 342)).